Here is a 550-residue protein sequence, read N- to C-terminus: Chaperonin GroEL 2 (550 aa).

Residues 30–33, K51, 87–91, G415, 480–482, and D496 each bind ATP; these read TLGP, DGTTT, and NAA.

Belongs to the chaperonin (HSP60) family. In terms of assembly, forms a cylinder of 14 subunits composed of two heptameric rings stacked back-to-back. Interacts with the co-chaperonin GroES.

The protein resides in the cytoplasm. The catalysed reaction is ATP + H2O + a folded polypeptide = ADP + phosphate + an unfolded polypeptide.. Functionally, together with its co-chaperonin GroES, plays an essential role in assisting protein folding. The GroEL-GroES system forms a nano-cage that allows encapsulation of the non-native substrate proteins and provides a physical environment optimized to promote and accelerate protein folding. The polypeptide is Chaperonin GroEL 2 (Erythrobacter litoralis (strain HTCC2594)).